The following is a 440-amino-acid chain: Xaa-Pro dipeptidase (440 aa).

The Mn(2+) site is built by Asp-246, Asp-257, His-337, Glu-382, and Glu-421.

Belongs to the peptidase M24B family. Bacterial-type prolidase subfamily. Requires Mn(2+) as cofactor.

The catalysed reaction is Xaa-L-Pro dipeptide + H2O = an L-alpha-amino acid + L-proline. In terms of biological role, splits dipeptides with a prolyl residue in the C-terminal position. The chain is Xaa-Pro dipeptidase from Aeromonas hydrophila subsp. hydrophila (strain ATCC 7966 / DSM 30187 / BCRC 13018 / CCUG 14551 / JCM 1027 / KCTC 2358 / NCIMB 9240 / NCTC 8049).